The following is a 517-amino-acid chain: Crotonobetaine/carnitine--CoA ligase (517 aa).

This sequence belongs to the ATP-dependent AMP-binding enzyme family.

The enzyme catalyses 4-(trimethylamino)butanoate + ATP + CoA = 4-(trimethylamino)butanoyl-CoA + AMP + diphosphate. It carries out the reaction crotonobetaine + ATP + CoA = crotonobetainyl-CoA + AMP + diphosphate. It catalyses the reaction (R)-carnitine + ATP + CoA = (R)-carnitinyl-CoA + AMP + diphosphate. It functions in the pathway amine and polyamine metabolism; carnitine metabolism. Catalyzes the transfer of CoA to carnitine, generating the initial carnitinyl-CoA needed for the CaiB reaction cycle. Also has activity toward crotonobetaine and gamma-butyrobetaine. The protein is Crotonobetaine/carnitine--CoA ligase of Salmonella heidelberg (strain SL476).